The chain runs to 185 residues: ADP-ribosylation factor (185 aa).

G2 carries the N-myristoyl glycine lipid modification. GTP is bound by residues 27 to 34 (GLDAAGKT), 70 to 74 (DVGGQ), and 129 to 132 (NKQD).

This sequence belongs to the small GTPase superfamily. Arf family.

It is found in the golgi apparatus. In terms of biological role, GTP-binding protein involved in protein trafficking; may modulate vesicle budding and uncoating within the Golgi apparatus. This Neurospora crassa (strain ATCC 24698 / 74-OR23-1A / CBS 708.71 / DSM 1257 / FGSC 987) protein is ADP-ribosylation factor.